Consider the following 2116-residue polypeptide: Non-structural polyprotein p200 (2116 aa).

Residues 36–49 form a required for efficient proteolysis and P150-P90 interaction region; sequence EVRDVVTAAQKRAI. The Alphavirus-like MT domain occupies 57 to 247; it reads VFTQMQVSDH…TRPCTTRIYQ (191 aa). The tract at residues 715 to 782 is disordered; the sequence is GQLAATSPPP…PTPAEPADRA (68 aa). 2 stretches are compositionally biased toward pro residues: residues 721 to 730 and 745 to 776; these read SPPPGDPPPP and TPPP…PTPA. 3 consecutive short sequence motifs (pxxPxR; class II SH3-binding) follow at residues 727-732, 747-752, and 761-766; these read PPPPRR, PPAPVR, and PPAPPR. The Macro domain maps to 806-985; sequence SDIVESYARA…LTHASVLVGA (180 aa). A disordered region spans residues 991–1030; the sequence is RVSPPPTEPLASCPAGGPGRPAQRSASPPATPLGDATAPE. The Peptidase C27 domain occupies 1000–1301; sequence LASCPAGGPG…WLAVPLSRGG (302 aa). Catalysis depends on Cys-1152, which acts as the For cysteine protease activity. An interaction with host CALM1 region spans residues 1152–1183; sequence CWLRAAANVAQVARACGAYTSAGCPKCAYGRA. Cys-1175, Cys-1178, Cys-1227, and His-1273 together coordinate Zn(2+). Residues 1193–1228 are EF-hand-like; that stretch reads FAALSQRWSASHADASPDGTGDPLDPLMETVGCACS. Residue His-1273 is the For cysteine protease activity of the active site. Residues 1320–1468 enclose the (+)RNA virus helicase ATP-binding domain; that stretch reads EVRRLGDDAM…VPDRWPTERS (149 aa). A ribonucleoside 5'-triphosphate is bound at residue 1352-1359; the sequence is MAAGAGKT. The (+)RNA virus helicase C-terminal domain occupies 1469 to 1609; the sequence is RHTWRFPDCW…ELKEVPAGID (141 aa). The segment at 1700–1900 is involved in P150-P90 interaction; the sequence is YRAGEDGSTL…VELEISAALL (201 aa). The RdRp catalytic domain maps to 1870–1981; the sequence is TNAIEVDFTE…FLPEGARSAA (112 aa). Positions 1902-1906 match the Human RB1 binding motif; it reads LPCAE.

As to quaternary structure, interacts with RNA-directed RNA polymerase p90. Interacts with host CALM1; this interaction is necessary for the protease activity and viral infectivity. Interacts with host C1QBP. Interacts with the capsid protein. In terms of assembly, interacts with human RB1/retinoblastoma protein. Interacts with protease/methyltransferase p150. The cofactor is Zn(2+). Specific enzymatic cleavage by its own cysteine protease yield mature proteins p150 and p90.

Its subcellular location is the host membrane. The protein resides in the host cytoplasm. It localises to the host perinuclear region. The catalysed reaction is RNA(n) + a ribonucleoside 5'-triphosphate = RNA(n+1) + diphosphate. It carries out the reaction a ribonucleoside 5'-triphosphate + H2O = a ribonucleoside 5'-diphosphate + phosphate + H(+). It catalyses the reaction ATP + H2O = ADP + phosphate + H(+). Functionally, probable principal replicase for the negative-strand DNA, which replicates the 40S (+) genomic RNA into (-) antigenomic RNA. It cannot replicate the (-) into (+) until cleaved into p150 and p90 mature proteins. Protease that cleaves the precursor polyprotein into two mature products. Together with RNA-directed RNA polymerase p90, replicates the 40S genomic and antigenomic RNA by recognizing replications specific signals. The heterodimer P150/p90 is probably the principal replicase for positive-strand genomic RNA and the 24S subgenomic RNA, which codes for structural proteins. Responsible for the mRNA-capping of the viral mRNAs. This function is necessary since all viral RNAs are synthesized in the cytoplasm, and host capping enzymes are restricted to the nucleus. Forms fibers late in the infection that may be involved in cell-to-cell spread of the virus RNA in the absence of virus particle formation. Its function is as follows. Together with protease/methyltransferase p150, replicates the 40S genomic and antigenomic RNA by recognizing replications specific signals. The heterodimer P150/p90 is probably the principal replicase for positive-strand genomic RNA and the 24S subgenomic RNA, which codes for structural proteins. A helicase activity is probably also present. The protein is Non-structural polyprotein p200 of Homo sapiens (Human).